The chain runs to 269 residues: Membrane protein insertase YidC 1 (269 aa).

The N-terminal stretch at M1 to A20 is a signal peptide. The N-palmitoyl cysteine moiety is linked to residue C21. C21 is lipidated: S-diacylglycerol cysteine. Transmembrane regions (helical) follow at residues I45–I65, Y124–L144, P165–M185, and P203–I223.

Belongs to the OXA1/ALB3/YidC family. Type 2 subfamily.

Its subcellular location is the cell membrane. Required for the insertion and/or proper folding and/or complex formation of integral membrane proteins into the membrane. Involved in integration of membrane proteins that insert both dependently and independently of the Sec translocase complex, as well as at least some lipoproteins. This Lactococcus lactis subsp. lactis (strain IL1403) (Streptococcus lactis) protein is Membrane protein insertase YidC 1.